A 627-amino-acid chain; its full sequence is Serine/threonine-protein kinase Nek5 (627 aa).

Residues 4 to 255 (FHLIKIIGEG…VTSLLKRPFL (252 aa)) enclose the Protein kinase domain. ATP-binding positions include 10–18 (IGEGTFGKV) and Lys-33. Asp-124 acts as the Proton acceptor in catalysis. A compositionally biased stretch (acidic residues) spans 563–580 (QLEPGSDEDDIKFEESED). Disordered regions lie at residues 563–582 (QLEP…EDEL) and 591–627 (EKLA…KKLQ). Residues 609–619 (NAEEPGEKEKT) show a composition bias toward basic and acidic residues.

It belongs to the protein kinase superfamily. NEK Ser/Thr protein kinase family. NIMA subfamily. The cofactor is Mg(2+).

Its subcellular location is the cell projection. It localises to the cilium. The protein resides in the flagellum. It catalyses the reaction L-seryl-[protein] + ATP = O-phospho-L-seryl-[protein] + ADP + H(+). The catalysed reaction is L-threonyl-[protein] + ATP = O-phospho-L-threonyl-[protein] + ADP + H(+). The sequence is that of Serine/threonine-protein kinase Nek5 (Nek5) from Mus musculus (Mouse).